The sequence spans 884 residues: Probable leucine-rich repeat receptor-like protein kinase At2g28990 (884 aa).

An N-terminal signal peptide occupies residues 1-19 (MKIHLLLAMIGTFVVIIGA). At 20 to 508 (QDQEGFISLD…TEKKNKFLLP (489 aa)) the chain is on the extracellular side. N-linked (GlcNAc...) asparagine glycans are attached at residues Asn70, Asn177, Asn217, Asn231, Asn251, Asn284, Asn298, Asn334, Asn418, Asn427, Asn438, Asn459, and Asn464. 3 LRR repeats span residues 404–427 (SPTI…ILQN), 428–451 (FTQL…FLAN), and 452–476 (MKTL…LLDK). A helical membrane pass occupies residues 509 to 529 (VIASAASLVIVVVVVALFFVF). Residues 530 to 884 (RKKKASPSNL…IYNEVIPQAR (355 aa)) are Cytoplasmic-facing. Residues 535 to 559 (SPSNLHAPPSMPVSNPGHNSQSESS) are disordered. Residues 546–559 (PVSNPGHNSQSESS) are compositionally biased toward polar residues. Position 568 is a phosphothreonine (Thr568). The Protein kinase domain maps to 577–850 (NNFDKALGEG…RVVNELKECL (274 aa)). Residues 583–591 (LGEGGFGVV) and Lys605 contribute to the ATP site. The residue at position 650 (Tyr650) is a Phosphotyrosine. Catalysis depends on Asp702, which acts as the Proton acceptor. Position 736 is a phosphoserine (Ser736). 2 positions are modified to phosphothreonine: Thr737 and Thr742. Residue Tyr750 is modified to Phosphotyrosine.

It belongs to the protein kinase superfamily. Ser/Thr protein kinase family. As to quaternary structure, binds to the ammonium transporter AMT1-1.

The protein localises to the membrane. The catalysed reaction is L-seryl-[protein] + ATP = O-phospho-L-seryl-[protein] + ADP + H(+). It catalyses the reaction L-threonyl-[protein] + ATP = O-phospho-L-threonyl-[protein] + ADP + H(+). In Arabidopsis thaliana (Mouse-ear cress), this protein is Probable leucine-rich repeat receptor-like protein kinase At2g28990.